Consider the following 336-residue polypeptide: PTS system glucitol/sorbitol-specific EIIB component (336 aa).

The 193-residue stretch at 3–195 folds into the PTS EIIB type-5 domain; sequence KYNAIKIVKG…AVQSMITTIL (193 aa). Catalysis depends on cysteine 75, which acts as the Phosphocysteine intermediate; for EIIB activity. Cysteine 75 carries the phosphocysteine; by EIIA modification. The next 5 helical transmembrane spans lie at 194–214, 228–248, 250–270, 278–298, and 312–332; these read ILPF…SGFG, GIGL…ALLG, GAVI…KGTI, ALFA…LGLA, and VLYS…VASI.

The protein localises to the cell membrane. The enzyme catalyses D-sorbitol(out) + N(pros)-phospho-L-histidyl-[protein] = D-sorbitol 6-phosphate(in) + L-histidyl-[protein]. In terms of biological role, the phosphoenolpyruvate-dependent sugar phosphotransferase system (sugar PTS), a major carbohydrate active transport system, catalyzes the phosphorylation of incoming sugar substrates concomitantly with their translocation across the cell membrane. The enzyme II complex composed of SrlA, SrlB and SrlE is involved in glucitol/sorbitol transport. This is PTS system glucitol/sorbitol-specific EIIB component (srlE) from Clostridium beijerinckii (strain ATCC 51743 / NCIMB 8052) (Clostridium acetobutylicum).